We begin with the raw amino-acid sequence, 355 residues long: MWNKNRLTQMLSIEYPIIQAGMAGSTTPKLVASVSNSGGLGTIGAGYFNTQQLEDEIDYVRQLTSNSFGVNVFVPSQQSYTSSQIENMNAWLKPYRRALHLEEPVVKIIEEQQFKCHIDTIIKKQVPVCCFTFGIPNESIIERLKEANIKLIGTATSVDEAIANEKAGMDAIVAQGSEAGGHRGSFLKPKNQLPMVGTISLVPQIVDVVSIPVIAAGGIMDGRGVLASIVLGAEGVQMGTAFLTSQDSNASELLRDAIINSKETDTVVTKAFSGKLARGINNRFIEEMSQYEGDIPDYPIQNELTSSIRKAAANIGDKELTHMWSGQSPRLATTHPANTIMSNIINQINQIMQYK.

FMN-binding positions include N71, Q175, G180, G218, and 237-240 (QMGT).

It belongs to the nitronate monooxygenase family. NMO class I subfamily. Requires FMN as cofactor.

It catalyses the reaction 3 propionate 3-nitronate + 3 O2 + H2O = 3 3-oxopropanoate + 2 nitrate + nitrite + H2O2 + 3 H(+). Its function is as follows. Nitronate monooxygenase that uses molecular oxygen to catalyze the oxidative denitrification of alkyl nitronates. Acts on propionate 3-nitronate (P3N), the presumed physiological substrate. Probably functions in the detoxification of P3N, a metabolic poison produced by plants and fungi as a defense mechanism. The protein is Probable nitronate monooxygenase of Staphylococcus aureus (strain JH1).